The following is a 404-amino-acid chain: MKRTVIMMLDSFGVGAAGDAAKFGDLGSDTFGHIAKACAEGKADIGREGPLTLPNLARLGLAHAAMESTGAFAPGFADDVELIGAYGHAQELSSGKDTPSGHWEMAGVPVLFDWGYFSEHQNSFPKELTDKILARAGLDGFLGNCHASGTTILEELGEEHMRSGKPIFYTSADSVFQIACHEGTFGLENLYRLCEIAREELEPYNIGRVIARPFDGTGPSDFARTGNRKDYSLEPPAKTVLDKLKAAGGEVVSVGKIADIYAYCGITKKVKANGLEALFDATLDEVKSAGENTIVFTNFVDFDSHYGHRRDVAGYAKGLEYFDSRLPEMLALLDEDDLLILTADHGCDPTWQGTDHTREYVPVLAYGAGLKAGSLGRRNSFADIGQSIASYFKLEPMEYGESFI.

Mn(2+) is bound by residues Asp-10, Asp-303, His-308, Asp-344, His-345, and His-356.

The protein belongs to the phosphopentomutase family. The cofactor is Mn(2+).

It is found in the cytoplasm. It catalyses the reaction 2-deoxy-alpha-D-ribose 1-phosphate = 2-deoxy-D-ribose 5-phosphate. The enzyme catalyses alpha-D-ribose 1-phosphate = D-ribose 5-phosphate. It functions in the pathway carbohydrate degradation; 2-deoxy-D-ribose 1-phosphate degradation; D-glyceraldehyde 3-phosphate and acetaldehyde from 2-deoxy-alpha-D-ribose 1-phosphate: step 1/2. Functionally, isomerase that catalyzes the conversion of deoxy-ribose 1-phosphate (dRib-1-P) and ribose 1-phosphate (Rib-1-P) to deoxy-ribose 5-phosphate (dRib-5-P) and ribose 5-phosphate (Rib-5-P), respectively. The sequence is that of Phosphopentomutase from Shewanella sp. (strain MR-4).